The following is a 192-amino-acid chain: dTTP/UTP pyrophosphatase (192 aa).

Aspartate 65 acts as the Proton acceptor in catalysis.

It belongs to the Maf family. YhdE subfamily. It depends on a divalent metal cation as a cofactor.

The protein resides in the cytoplasm. The catalysed reaction is dTTP + H2O = dTMP + diphosphate + H(+). It catalyses the reaction UTP + H2O = UMP + diphosphate + H(+). Functionally, nucleoside triphosphate pyrophosphatase that hydrolyzes dTTP and UTP. May have a dual role in cell division arrest and in preventing the incorporation of modified nucleotides into cellular nucleic acids. The chain is dTTP/UTP pyrophosphatase from Fusobacterium nucleatum subsp. nucleatum (strain ATCC 25586 / DSM 15643 / BCRC 10681 / CIP 101130 / JCM 8532 / KCTC 2640 / LMG 13131 / VPI 4355).